The chain runs to 256 residues: MALAKRIIPCLDVDNGRVVKGVRFENIRDAGDPVEIAQRYDEQGADEITFLDITASHEGRDTTLHTVERMASQVFIPLTVGGGVRTVQDIRNLLNAGADKVSINTAAVFNPEFVGEAAGRFGSQCIVVAIDAKKVSGPGEAPRWEIFTHGGRKPTGLDAVAWAKKMEDYGAGEILLTSMDQDGMKSGFDLGVTRAISEAVGIPVIASGGVGNLEHLAAGILEGKADAVLAASIFHFGEYTVPEAKAYLAGRGIVVR.

Active-site residues include D12 and D131.

The protein belongs to the HisA/HisF family. In terms of assembly, heterodimer of HisH and HisF.

The protein localises to the cytoplasm. The catalysed reaction is 5-[(5-phospho-1-deoxy-D-ribulos-1-ylimino)methylamino]-1-(5-phospho-beta-D-ribosyl)imidazole-4-carboxamide + L-glutamine = D-erythro-1-(imidazol-4-yl)glycerol 3-phosphate + 5-amino-1-(5-phospho-beta-D-ribosyl)imidazole-4-carboxamide + L-glutamate + H(+). Its pathway is amino-acid biosynthesis; L-histidine biosynthesis; L-histidine from 5-phospho-alpha-D-ribose 1-diphosphate: step 5/9. In terms of biological role, IGPS catalyzes the conversion of PRFAR and glutamine to IGP, AICAR and glutamate. The HisF subunit catalyzes the cyclization activity that produces IGP and AICAR from PRFAR using the ammonia provided by the HisH subunit. This Azotobacter vinelandii (strain DJ / ATCC BAA-1303) protein is Imidazole glycerol phosphate synthase subunit HisF.